A 275-amino-acid chain; its full sequence is Interleukin-2 receptor subunit alpha (275 aa).

A signal peptide spans 1–21 (MEPSLLMWRFFVFIVVPGCVT). Sushi domains lie at 22 to 81 (EACH…FCNS) and 121 to 186 (GHCE…KCIS). Over 22-243 (EACHDDPPSL…DTFIFTTEYQ (222 aa)) the chain is Extracellular. 3 disulfide bridges follow: C24/C64, C49/C77, and C51/C79. N80 carries an N-linked (GlcNAc...) asparagine glycan. The disordered stretch occupies residues 86 to 130 (KNPVKPVTPGSEEQRERKPTDAQSQTQPPEQADLPGHCEEPPPWE). Basic and acidic residues predominate over residues 121–130 (GHCEEPPPWE). Intrachain disulfides connect C123–C168 and C152–C184. The segment at 188–213 (GANSQAPDEAEPPESTEAPPGSGTFL) is disordered. The helical transmembrane segment at 244 to 262 (IAVAGCILLLSSILLLSCL) threads the bilayer. The Cytoplasmic segment spans residues 263–275 (TWQRRWKKNRRTI).

Non-covalent dimer of an alpha and a beta subunit. IL2R exists in 3 different forms: a high affinity dimer, an intermediate affinity monomer (beta subunit), and a low affinity monomer (alpha subunit). The high and intermediate affinity forms also associate with a gamma subunit.

It is found in the membrane. Functionally, receptor for interleukin-2. The receptor is involved in the regulation of immune tolerance by controlling regulatory T cells (TREGs) activity. TREGs suppress the activation and expansion of autoreactive T-cells. The polypeptide is Interleukin-2 receptor subunit alpha (IL2RA) (Ovis aries (Sheep)).